Here is a 332-residue protein sequence, read N- to C-terminus: Melanocortin receptor 4 (332 aa).

Topologically, residues 1-43 are extracellular; that stretch reads MNSTHHHGMHTSLHFWNRSTYGLHSNASEPLGKGYSEGGCYEQ. N-linked (GlcNAc...) asparagine glycosylation is found at asparagine 2, asparagine 17, and asparagine 26. Intrachain disulfides connect cysteine 40–cysteine 279 and cysteine 271–cysteine 277. Residues 44 to 69 traverse the membrane as a helical segment; sequence LFVSPEVFVTLGVISLLENILVIVAI. Over 70–81 the chain is Cytoplasmic; it reads AKNKNLHSPMYF. The helical transmembrane segment at 82-106 threads the bilayer; it reads FICSLAVADMLVSVSNGSETIVITL. Residues glutamate 100, aspartate 122, and aspartate 126 each coordinate Ca(2+). The Extracellular segment spans residues 107–123; it reads LNSTDTDAQSFTVNIDN. Residues 124 to 145 form a helical membrane-spanning segment; sequence VIDSVICSSLLASICSLLSIAV. The Cytoplasmic portion of the chain corresponds to 146–165; sequence DRYFTIFYALQYHNIMTVKR. The helical transmembrane segment at 166-186 threads the bilayer; that stretch reads VGIIISCIWAVCTVSGVLFII. The Extracellular segment spans residues 187–191; sequence YSDSS. Residues 192–215 form a helical membrane-spanning segment; that stretch reads AVIICLITVFFTMLALMASLYVHM. The Cytoplasmic segment spans residues 216 to 248; that stretch reads FLMARLHIKRIAVLPGTGTIRQGANMKGAITLT. The chain crosses the membrane as a helical span at residues 249-271; the sequence is ILIGVFVVCWAPFFLHLIFYISC. The Extracellular portion of the chain corresponds to 272-280; sequence PQNPYCVCF. A helical transmembrane segment spans residues 281 to 304; sequence MSHFNLYLILIMCNSIIDPLIYAL. The Cytoplasmic portion of the chain corresponds to 305-332; sequence RSQELRKTFKEIICCYPLGGLCDLSSRY. Cysteine 318 carries S-palmitoyl cysteine lipidation.

Belongs to the G-protein coupled receptor 1 family. In terms of assembly, homodimer; disulfide-linked, also forms higher order oligomers. Interacts with GNAS. Interacts with ATRNL1. Interacts with MGRN1; this interaction competes with GNAS-binding and thus inhibits agonist-induced cAMP production. Interacts with MRAP and MRAP2; these associated factors increase ligand-sensitivity and generation of cAMP.

The protein localises to the cell membrane. Hormone receptor that acts as a key component of the leptin-melanocortin pathway at the intersection of homeostatic maintenance of energetic state. Plays a role in regulating food intake: activation by a stimulating hormone such as anorexigenic alpha-melanocyte stimulating hormone (alpha-MSH) inhibits appetite, whereas binding to a natural antagonist like Agouti-related protein/AGRP promotes appetite. G-protein-coupled receptor that activates conventional Galphas signaling leading to induction of anorexogenic signaling in the hypothalamus to result in negative energy balance. Regulates the firing activity of neurons from the hypothalamus by alpha-MSH and AGRP independently of Galphas signaling by ligand-induced coupling of closure of inwardly rectifying potassium channel KCNJ13. In intestinal epithelial cells, plays a role in the inhibition of hepatic glucose production via nesfatin-1/NUCB2 leading to increased cyclic adenosine monophosphate (cAMP) levels and glucagon-like peptide 1 (GLP-1) secretion in the intestinal epithelium. The chain is Melanocortin receptor 4 (MC4R) from Sus scrofa (Pig).